Reading from the N-terminus, the 825-residue chain is E3 ubiquitin-protein ligase ICP0 (825 aa).

Residues 1 to 10 (MEPRPGTSSR) show a composition bias toward polar residues. Residues 1–121 (MEPRPGTSSR…VGEEEAEAGG (121 aa)) are disordered. Over residues 46–57 (DSEEETEVGISD) the composition is skewed to acidic residues. Residues 126–167 (CAVCTDEIAPPLRCQSFPCLHPFCIPCMKTWIPLRNTCPLCN) form an RING-type zinc finger. Disordered stretches follow at residues 221 to 312 (RSLS…GGGP), 325 to 683 (PPAA…PAPG), and 803 to 825 (RHPW…GHGE). Acidic residues predominate over residues 242–251 (TDDEDDDLAD). Low complexity-rich tracts occupy residues 273–283 (TRGTSQPAATR), 290–303 (PRSS…LRAG), and 350–367 (PPAR…VISD). Positions 368 to 379 (SPPPSPRRPAGP) are enriched in pro residues. 2 stretches are compositionally biased toward low complexity: residues 380 to 394 (GPLS…QVSS) and 402 to 439 (PQSS…DAAG). A compositionally biased stretch (polar residues) spans 456 to 468 (RMTQAQTDTQAQS). Positions 479-491 (GSGGPGAEGGPGV) are enriched in gly residues. Low complexity-rich tracts occupy residues 492–510 (PRGT…GAAA) and 519–540 (DSGP…PLAP). Positions 552–563 (RAPDSDSGDRGH) are enriched in basic and acidic residues. Residues 567 to 641 (APASAGAAPP…GGSVASASGA (75 aa)) show a composition bias toward low complexity. Over residues 658-667 (GPRKCARKTR) the composition is skewed to basic residues. The segment covering 811–825 (GAPAPAGDAPAGHGE) has biased composition (low complexity).

Post-translationally, auto-ubiquitinated.

It catalyses the reaction S-ubiquitinyl-[E2 ubiquitin-conjugating enzyme]-L-cysteine + [acceptor protein]-L-lysine = [E2 ubiquitin-conjugating enzyme]-L-cysteine + N(6)-ubiquitinyl-[acceptor protein]-L-lysine.. Evades nuclear antiviral defenses triggered by dsDNA viruses. Acts during the initial stages of lytic infection and the reactivation of latent viral genome. Prevents the antiviral effect of nuclear bodies by degrading host PML and SP100. Prevents antiviral response to viral DNA induced by IFI16 by degrading it. Additionally, inhibits host IRF3 nuclear signaling to prevent interferon production by the infected cells. This Homo sapiens (Human) protein is E3 ubiquitin-protein ligase ICP0 (RL2).